A 492-amino-acid polypeptide reads, in one-letter code: Falcipain-3 (492 aa).

The Cytoplasmic portion of the chain corresponds to 1 to 35; that stretch reads MEYHMEYSPNEVIKQEREVFVGKEKSGSKFKRKRS. The propeptide at 1–242 is activation peptide; it reads MEYHMEYSPN…LNLKTHGPFK (242 aa). Positions 16-25 match the Bipartite vacuolar targeting signal 1 motif; that stretch reads EREVFVGKEK. The chain crosses the membrane as a helical; Signal-anchor for type II membrane protein span at residues 36 to 56; the sequence is IFIVLTVSICFMFALMLFYFT. At 57-492 the chain is on the lumenal side; that stretch reads RNENNKTLFT…GTEAYVPLLE (436 aa). Asparagine 61 is a glycosylation site (N-linked (GlcNAc...) asparagine). Positions 84–105 match the Bipartite vacuolar targeting signal 2 motif; it reads KSESGKKFIVSKLEELISSYDK. N-linked (GlcNAc...) asparagine glycosylation is present at asparagine 129. The Nose motif; required for the correct folding of the mature form motif lies at 251 to 268; the sequence is EANYEDVIKKYKPADAKL. Intrachain disulfides connect cysteine 290-cysteine 331, cysteine 324-cysteine 365, cysteine 350-cysteine 370, and cysteine 419-cysteine 480. Cysteine 293 is an active-site residue. Histidine 425 is an active-site residue. Residues 436–445 carry the Arm motif; binds to host hemoglobin and required for the inhibitory interaction between the propeptide and the catalytic domain motif; that stretch reads DIYNEDTGRM. Asparagine 455 is a catalytic residue.

Belongs to the peptidase C1 family. Auto-cleavage occurs at acidic pH. The proenzyme is the predominant form in late trophozoites and both the pro and mature enzyme are present in schizonts.

The protein localises to the membrane. The protein resides in the vacuole. Its subcellular location is the cytoplasmic vesicle membrane. Inhibited by cysteine protease inhibitor ICP. Functionally, cysteine protease which cleaves native host hemoglobin and globin in the food vacuole during the asexual blood stage. Preferentially cleaves substrates which have an arginine at the P1 position and a leucine at the P2 position. This Plasmodium falciparum (isolate 3D7) protein is Falcipain-3.